A 371-amino-acid chain; its full sequence is MNPPGTFHITATDGSARTGVLYTAHGIVNTPIFMPVGTVGSVKAIAPDDLEAISAEIILGNTYHLYLRPGDELIARRGGLHVFNAWEKPILTDSGGFQIFSLSSLRKLHKDGVIFRSHIDGSKHVFTPERVITIQRNLNSDIMMVLDECVAANADYTYTAQSLDLTIHWAKRSRDVYPKGEGDNLLFGIVQGGMFKSLRHSSVSQLIDLDFDGYAIGGLSVGEPKEIMMELLYDTAPLLPKTKPRYLMGVGTPLDILKGIEAGVDMFDCVLPTRNARNGTLYTSQGKLNIKRKEYAEDDLPLDENCSCYTCQTFSRAYLRHLFHSQELLAFRLNSIHNLTYFLNIIFGARKAIHGGYFFNYKQQVEQLYCN.

The Proton acceptor role is filled by aspartate 93. Residues 93 to 97 (DSGGF), aspartate 147, glutamine 191, and glycine 218 each bind substrate. The interval 249 to 255 (GVGTPLD) is RNA binding. The active-site Nucleophile is aspartate 268. Residues 273 to 277 (TRNAR) form an RNA binding; important for wobble base 34 recognition region. Zn(2+) contacts are provided by cysteine 306, cysteine 308, cysteine 311, and histidine 337.

The protein belongs to the queuine tRNA-ribosyltransferase family. As to quaternary structure, homodimer. Within each dimer, one monomer is responsible for RNA recognition and catalysis, while the other monomer binds to the replacement base PreQ1. Zn(2+) is required as a cofactor.

It catalyses the reaction 7-aminomethyl-7-carbaguanine + guanosine(34) in tRNA = 7-aminomethyl-7-carbaguanosine(34) in tRNA + guanine. Its pathway is tRNA modification; tRNA-queuosine biosynthesis. In terms of biological role, catalyzes the base-exchange of a guanine (G) residue with the queuine precursor 7-aminomethyl-7-deazaguanine (PreQ1) at position 34 (anticodon wobble position) in tRNAs with GU(N) anticodons (tRNA-Asp, -Asn, -His and -Tyr). Catalysis occurs through a double-displacement mechanism. The nucleophile active site attacks the C1' of nucleotide 34 to detach the guanine base from the RNA, forming a covalent enzyme-RNA intermediate. The proton acceptor active site deprotonates the incoming PreQ1, allowing a nucleophilic attack on the C1' of the ribose to form the product. After dissociation, two additional enzymatic reactions on the tRNA convert PreQ1 to queuine (Q), resulting in the hypermodified nucleoside queuosine (7-(((4,5-cis-dihydroxy-2-cyclopenten-1-yl)amino)methyl)-7-deazaguanosine). This chain is Queuine tRNA-ribosyltransferase, found in Lawsonia intracellularis (strain PHE/MN1-00).